A 122-amino-acid polypeptide reads, in one-letter code: Large ribosomal subunit protein uL14 (122 aa).

The protein belongs to the universal ribosomal protein uL14 family. In terms of assembly, part of the 50S ribosomal subunit. Forms a cluster with proteins L3 and L19. In the 70S ribosome, L14 and L19 interact and together make contacts with the 16S rRNA in bridges B5 and B8.

Binds to 23S rRNA. Forms part of two intersubunit bridges in the 70S ribosome. The sequence is that of Large ribosomal subunit protein uL14 from Rippkaea orientalis (strain PCC 8801 / RF-1) (Cyanothece sp. (strain PCC 8801)).